The sequence spans 130 residues: Sulfurtransferase TusD (130 aa).

Catalysis depends on C78, which acts as the Cysteine persulfide intermediate.

Belongs to the DsrE/TusD family. Heterohexamer, formed by a dimer of trimers. The hexameric TusBCD complex contains 2 copies each of TusB, TusC and TusD. The TusBCD complex interacts with TusE.

The protein localises to the cytoplasm. Functionally, part of a sulfur-relay system required for 2-thiolation of 5-methylaminomethyl-2-thiouridine (mnm(5)s(2)U) at tRNA wobble positions. Accepts sulfur from TusA and transfers it in turn to TusE. The sequence is that of Sulfurtransferase TusD from Buchnera aphidicola subsp. Baizongia pistaciae (strain Bp).